The sequence spans 417 residues: Tyrosine--tRNA ligase (417 aa).

Y39 contacts L-tyrosine. Positions 44-53 match the 'HIGH' region motif; the sequence is PTASSLHAGS. L-tyrosine contacts are provided by Y176 and Q180. Positions 236–240 match the 'KMSKS' region motif; it reads KMGKS. K239 lines the ATP pocket. An S4 RNA-binding domain is found at 350-417; the sequence is TGLLILLVQA…KKKHVLIKPL (68 aa).

Belongs to the class-I aminoacyl-tRNA synthetase family. TyrS type 1 subfamily. In terms of assembly, homodimer.

The protein localises to the cytoplasm. The enzyme catalyses tRNA(Tyr) + L-tyrosine + ATP = L-tyrosyl-tRNA(Tyr) + AMP + diphosphate + H(+). In terms of biological role, catalyzes the attachment of tyrosine to tRNA(Tyr) in a two-step reaction: tyrosine is first activated by ATP to form Tyr-AMP and then transferred to the acceptor end of tRNA(Tyr). In Bartonella henselae (strain ATCC 49882 / DSM 28221 / CCUG 30454 / Houston 1) (Rochalimaea henselae), this protein is Tyrosine--tRNA ligase.